The following is a 361-amino-acid chain: tRNA/tmRNA (uracil-C(5))-methyltransferase (361 aa).

Positions 183, 211, 216, 232, and 294 each coordinate S-adenosyl-L-methionine. Cys-319 functions as the Nucleophile in the catalytic mechanism. Residue Glu-353 is the Proton acceptor of the active site.

This sequence belongs to the class I-like SAM-binding methyltransferase superfamily. RNA M5U methyltransferase family. TrmA subfamily.

The catalysed reaction is uridine(54) in tRNA + S-adenosyl-L-methionine = 5-methyluridine(54) in tRNA + S-adenosyl-L-homocysteine + H(+). It catalyses the reaction uridine(341) in tmRNA + S-adenosyl-L-methionine = 5-methyluridine(341) in tmRNA + S-adenosyl-L-homocysteine + H(+). Dual-specificity methyltransferase that catalyzes the formation of 5-methyluridine at position 54 (m5U54) in all tRNAs, and that of position 341 (m5U341) in tmRNA (transfer-mRNA). The sequence is that of tRNA/tmRNA (uracil-C(5))-methyltransferase from Acinetobacter baylyi (strain ATCC 33305 / BD413 / ADP1).